A 392-amino-acid polypeptide reads, in one-letter code: Formate-dependent phosphoribosylglycinamide formyltransferase (392 aa).

N(1)-(5-phospho-beta-D-ribosyl)glycinamide-binding positions include Glu22–Leu23 and Glu82. Residues Arg114, Lys155, Ser160–Gln165, Glu195–Val198, and Glu203 each bind ATP. Residues Arg119–Leu308 form the ATP-grasp domain. Glu267 and Glu279 together coordinate Mg(2+). N(1)-(5-phospho-beta-D-ribosyl)glycinamide contacts are provided by residues Asp286, Lys355, and Arg362–Arg363.

This sequence belongs to the PurK/PurT family. As to quaternary structure, homodimer.

The catalysed reaction is N(1)-(5-phospho-beta-D-ribosyl)glycinamide + formate + ATP = N(2)-formyl-N(1)-(5-phospho-beta-D-ribosyl)glycinamide + ADP + phosphate + H(+). The protein operates within purine metabolism; IMP biosynthesis via de novo pathway; N(2)-formyl-N(1)-(5-phospho-D-ribosyl)glycinamide from N(1)-(5-phospho-D-ribosyl)glycinamide (formate route): step 1/1. In terms of biological role, involved in the de novo purine biosynthesis. Catalyzes the transfer of formate to 5-phospho-ribosyl-glycinamide (GAR), producing 5-phospho-ribosyl-N-formylglycinamide (FGAR). Formate is provided by PurU via hydrolysis of 10-formyl-tetrahydrofolate. The protein is Formate-dependent phosphoribosylglycinamide formyltransferase of Shigella dysenteriae serotype 1 (strain Sd197).